The following is a 173-amino-acid chain: uncharacterized protein (173 aa).

Transmembrane regions (helical) follow at residues 24–44 (VAFIAIPISQFCFFNLLWLFF), 82–102 (YILFNILIFATNILVICSYFI), and 135–155 (LIKRFLAYITFPIGIFFILFS).

The protein resides in the cell membrane. This is an uncharacterized protein from Rickettsia prowazekii (strain Madrid E).